Here is a 294-residue protein sequence, read N- to C-terminus: Putative inactive magnesium transporter MRS2-8 (294 aa).

The stretch at 179-216 (KLKSSMTRLTAQVQKIKDELEQLLEDDEDMAELYLSRK) forms a coiled coil.

This sequence belongs to the CorA metal ion transporter (MIT) (TC 1.A.35.5) family.

This Arabidopsis thaliana (Mouse-ear cress) protein is Putative inactive magnesium transporter MRS2-8 (MRS2-8).